A 460-amino-acid polypeptide reads, in one-letter code: Phosphoenolpyruvate carboxylase (460 aa).

Belongs to the PEPCase type 2 family. Homotetramer. Mg(2+) serves as cofactor.

The enzyme catalyses oxaloacetate + phosphate = phosphoenolpyruvate + hydrogencarbonate. Catalyzes the irreversible beta-carboxylation of phosphoenolpyruvate (PEP) to form oxaloacetate (OAA), a four-carbon dicarboxylic acid source for the tricarboxylic acid cycle. This Pyrobaculum aerophilum (strain ATCC 51768 / DSM 7523 / JCM 9630 / CIP 104966 / NBRC 100827 / IM2) protein is Phosphoenolpyruvate carboxylase.